Reading from the N-terminus, the 158-residue chain is Glycosyl-phosphatidylinositol-anchored molecule-like protein (158 aa).

The first 17 residues, 1 to 17 (MLLFALLLAMELPLVAA), serve as a signal peptide directing secretion. The 106-residue stretch at 29-134 (LRCHDCAVIN…DEVTEEELPE (106 aa)) folds into the UPAR/Ly6 domain. Disulfide bonds link C31/C55, C34/C42, C48/C73, C77/C104, and C105/C110.

The protein resides in the cell membrane. In terms of biological role, may play a role in the apoptotic pathway or cell-cycle regulation induced by p53/TP53 after DNA damage. This is Glycosyl-phosphatidylinositol-anchored molecule-like protein (GML) from Homo sapiens (Human).